The following is a 60-amino-acid chain: Large ribosomal subunit protein bL32 (60 aa).

Belongs to the bacterial ribosomal protein bL32 family.

The polypeptide is Large ribosomal subunit protein bL32 (Geobacter sulfurreducens (strain ATCC 51573 / DSM 12127 / PCA)).